Here is a 143-residue protein sequence, read N- to C-terminus: MGKPKGIRAARKLKTHRQAQRWNDKGYKKAHLGTRWKANPFGTASHAKGIVLEKVGVEAKQPNSAIRKCVRVQLIKNGKKITAFVPNDGCLNFIEENDEVLVAGFGRKGHAVGDIPGVRFKIVKVANTSLIALFKGKKERPRS.

Over residues 1–19 (MGKPKGIRAARKLKTHRQA) the composition is skewed to basic residues. The tract at residues 1–21 (MGKPKGIRAARKLKTHRQAQR) is disordered. Position 62 is a hydroxyproline (Pro-62).

This sequence belongs to the universal ribosomal protein uS12 family. Component of the 40S small ribosomal subunit.

It is found in the cytoplasm. The protein resides in the cytosol. Its subcellular location is the rough endoplasmic reticulum. In Brugia malayi (Filarial nematode worm), this protein is Small ribosomal subunit protein uS12 (rps-23).